A 184-amino-acid polypeptide reads, in one-letter code: V-type proton ATPase subunit E (184 aa).

This sequence belongs to the V-ATPase E subunit family.

Produces ATP from ADP in the presence of a proton gradient across the membrane. The protein is V-type proton ATPase subunit E of Finegoldia magna (strain ATCC 29328 / DSM 20472 / WAL 2508) (Peptostreptococcus magnus).